Here is a 206-residue protein sequence, read N- to C-terminus: MSRTKSSKRWLQEHFDDVYVKKAQAEGYRSRAVYKLKEIDDKESLIKPGMTVVDLGAAPGGWTQYASEKMKGSGRLVALDILPMDALPNVEFILGDFREDNVLQELINLIPQRTLDLLLSDMAPNMSGSSAIDIPRAMYLVELAFDFAEKMLKPGGNMLVKIFHGSGFDELVKQARASFEKVVIRKPSASRSRSKETYLLAKGYNL.

Positions 60, 62, 80, 96, and 121 each coordinate S-adenosyl-L-methionine. Lysine 161 (proton acceptor) is an active-site residue.

Belongs to the class I-like SAM-binding methyltransferase superfamily. RNA methyltransferase RlmE family.

The protein localises to the cytoplasm. The catalysed reaction is uridine(2552) in 23S rRNA + S-adenosyl-L-methionine = 2'-O-methyluridine(2552) in 23S rRNA + S-adenosyl-L-homocysteine + H(+). In terms of biological role, specifically methylates the uridine in position 2552 of 23S rRNA at the 2'-O position of the ribose in the fully assembled 50S ribosomal subunit. The sequence is that of Ribosomal RNA large subunit methyltransferase E from Legionella pneumophila (strain Corby).